A 599-amino-acid polypeptide reads, in one-letter code: Elongation factor 4 (599 aa).

A tr-type G domain is found at 2 to 184 (KNIRNFSIIA…RLVRDIPPPE (183 aa)). GTP is bound by residues 14 to 19 (DHGKST) and 131 to 134 (NKID).

This sequence belongs to the TRAFAC class translation factor GTPase superfamily. Classic translation factor GTPase family. LepA subfamily.

Its subcellular location is the cell inner membrane. It catalyses the reaction GTP + H2O = GDP + phosphate + H(+). Required for accurate and efficient protein synthesis under certain stress conditions. May act as a fidelity factor of the translation reaction, by catalyzing a one-codon backward translocation of tRNAs on improperly translocated ribosomes. Back-translocation proceeds from a post-translocation (POST) complex to a pre-translocation (PRE) complex, thus giving elongation factor G a second chance to translocate the tRNAs correctly. Binds to ribosomes in a GTP-dependent manner. The polypeptide is Elongation factor 4 (Escherichia coli O8 (strain IAI1)).